The sequence spans 288 residues: ATP phosphoribosyltransferase (288 aa).

The protein belongs to the ATP phosphoribosyltransferase family. Long subfamily. It depends on Mg(2+) as a cofactor.

Its subcellular location is the cytoplasm. It catalyses the reaction 1-(5-phospho-beta-D-ribosyl)-ATP + diphosphate = 5-phospho-alpha-D-ribose 1-diphosphate + ATP. It functions in the pathway amino-acid biosynthesis; L-histidine biosynthesis; L-histidine from 5-phospho-alpha-D-ribose 1-diphosphate: step 1/9. With respect to regulation, feedback inhibited by histidine. Functionally, catalyzes the condensation of ATP and 5-phosphoribose 1-diphosphate to form N'-(5'-phosphoribosyl)-ATP (PR-ATP). Has a crucial role in the pathway because the rate of histidine biosynthesis seems to be controlled primarily by regulation of HisG enzymatic activity. This chain is ATP phosphoribosyltransferase, found in Methanococcus maripaludis (strain C5 / ATCC BAA-1333).